Reading from the N-terminus, the 322-residue chain is Pilin gene-inverting protein (322 aa).

In terms of biological role, may be the site-specific invertase required for pilin gene inversion. Moraxella can express either a Q or I pilin; the inversion of 2 kb of DNA determines which pilin is expressed. The chain is Pilin gene-inverting protein (piv) from Moraxella bovis.